Consider the following 456-residue polypeptide: UDP-N-acetylmuramate--L-alanine ligase (456 aa).

117 to 123 (GTHGKTT) is a binding site for ATP.

Belongs to the MurCDEF family.

The protein localises to the cytoplasm. The catalysed reaction is UDP-N-acetyl-alpha-D-muramate + L-alanine + ATP = UDP-N-acetyl-alpha-D-muramoyl-L-alanine + ADP + phosphate + H(+). It functions in the pathway cell wall biogenesis; peptidoglycan biosynthesis. Functionally, cell wall formation. The polypeptide is UDP-N-acetylmuramate--L-alanine ligase (Clostridium tetani (strain Massachusetts / E88)).